Consider the following 401-residue polypeptide: uncharacterized protein (401 aa).

Lysine 242 carries the N6-(pyridoxal phosphate)lysine modification.

The protein belongs to the class-I pyridoxal-phosphate-dependent aminotransferase family. In terms of assembly, homodimer. Pyridoxal 5'-phosphate is required as a cofactor.

The protein localises to the cytoplasm. This is an uncharacterized protein from Saccharolobus solfataricus (strain ATCC 35092 / DSM 1617 / JCM 11322 / P2) (Sulfolobus solfataricus).